The chain runs to 21 residues: Venom peptide Tv1 (21 aa).

3 cysteine pairs are disulfide-bonded: cysteine 4/cysteine 20, cysteine 5/cysteine 21, and cysteine 7/cysteine 16.

In terms of tissue distribution, expressed by the salivary gland. This peptide is considered as a venom peptide.

Its subcellular location is the secreted. Functionally, injections of 20 uM of this synthetic peptide (Ile) causes partial paralysis to polychaete worms (Nereis virens), the natural prey of terebrid snails. This paralysis may be due to an inhibition of nicotinic receptors at the neuromuscular junction. This Terebra variegata (Variegate auger snail) protein is Venom peptide Tv1.